The chain runs to 214 residues: Phosphatidylserine decarboxylase proenzyme (214 aa).

The active-site Schiff-base intermediate with substrate; via pyruvic acid is Ser-182. The residue at position 182 (Ser-182) is a Pyruvic acid (Ser); by autocatalysis.

It belongs to the phosphatidylserine decarboxylase family. PSD-A subfamily. Heterodimer of a large membrane-associated beta subunit and a small pyruvoyl-containing alpha subunit. It depends on pyruvate as a cofactor. In terms of processing, is synthesized initially as an inactive proenzyme. Formation of the active enzyme involves a self-maturation process in which the active site pyruvoyl group is generated from an internal serine residue via an autocatalytic post-translational modification. Two non-identical subunits are generated from the proenzyme in this reaction, and the pyruvate is formed at the N-terminus of the alpha chain, which is derived from the carboxyl end of the proenzyme. The post-translation cleavage follows an unusual pathway, termed non-hydrolytic serinolysis, in which the side chain hydroxyl group of the serine supplies its oxygen atom to form the C-terminus of the beta chain, while the remainder of the serine residue undergoes an oxidative deamination to produce ammonia and the pyruvoyl prosthetic group on the alpha chain.

The protein resides in the cell membrane. It catalyses the reaction a 1,2-diacyl-sn-glycero-3-phospho-L-serine + H(+) = a 1,2-diacyl-sn-glycero-3-phosphoethanolamine + CO2. It functions in the pathway phospholipid metabolism; phosphatidylethanolamine biosynthesis; phosphatidylethanolamine from CDP-diacylglycerol: step 2/2. In terms of biological role, catalyzes the formation of phosphatidylethanolamine (PtdEtn) from phosphatidylserine (PtdSer). This Burkholderia cenocepacia (strain ATCC BAA-245 / DSM 16553 / LMG 16656 / NCTC 13227 / J2315 / CF5610) (Burkholderia cepacia (strain J2315)) protein is Phosphatidylserine decarboxylase proenzyme.